The chain runs to 526 residues: GMP synthase [glutamine-hydrolyzing] (526 aa).

The 197-residue stretch at 3 to 199 folds into the Glutamine amidotransferase type-1 domain; sequence RVAIIDFGSQ…FVRIAGCDNN (197 aa). C83 functions as the Nucleophile in the catalytic mechanism. Active-site residues include H174 and E176. In terms of domain architecture, GMPS ATP-PPase spans 200–392; that stretch reads WTVESFLDEQ…LGISDEILMR (193 aa). An ATP-binding site is contributed by 227 to 233; it reads SGGVDSS.

As to quaternary structure, homodimer.

It catalyses the reaction XMP + L-glutamine + ATP + H2O = GMP + L-glutamate + AMP + diphosphate + 2 H(+). It participates in purine metabolism; GMP biosynthesis; GMP from XMP (L-Gln route): step 1/1. Its function is as follows. Catalyzes the synthesis of GMP from XMP. The protein is GMP synthase [glutamine-hydrolyzing] of Ehrlichia chaffeensis (strain ATCC CRL-10679 / Arkansas).